The sequence spans 205 residues: Glycerol-3-phosphate acyltransferase (205 aa).

The Periplasmic segment spans residues 1 to 3 (MSA). A helical transmembrane segment spans residues 4-24 (IAPGMILIAYLCGSISSAILV). At 25 to 52 (CRLCGLPDPRTSGSGNPGATNVLRIGGK) the chain is on the cytoplasmic side. A helical transmembrane segment spans residues 53-73 (GAAVAVLIFDVLKGMLPVWGA). Residues 74–80 (YELGVSP) are Periplasmic-facing. Residues 81 to 101 (FWLGLIAIAACLGHIWPVFFG) form a helical membrane-spanning segment. The Cytoplasmic segment spans residues 102–111 (FKGGKGVATA). The chain crosses the membrane as a helical span at residues 112 to 132 (FGAIAPISWDLTGVMAGTWLL). The Periplasmic segment spans residues 133–137 (TVLLS). Residues 138-158 (GYSSLGAIVSALIAPFYVWWF) traverse the membrane as a helical segment. Residues 159–205 (KPQFTFPVSMLSCLILLRHHDNIQRLWRRQETKIWTKFKRKREKDPE) are Cytoplasmic-facing.

Belongs to the PlsY family. Probably interacts with PlsX.

The protein resides in the cell inner membrane. It carries out the reaction sn-glycerol 3-phosphate + an acyl-CoA = a 1-acyl-sn-glycero-3-phosphate + CoA. The catalysed reaction is a fatty acyl-[ACP] + sn-glycerol 3-phosphate = a 1-acyl-sn-glycero-3-phosphate + holo-[ACP]. Its pathway is lipid metabolism; phospholipid metabolism. Its function is as follows. Catalyzes the transfer of an acyl group from acyl-ACP to glycerol-3-phosphate (G3P) to form lysophosphatidic acid (LPA). This enzyme can also utilize acyl-CoA as fatty acyl donor, but not acyl-PO(4). The chain is Glycerol-3-phosphate acyltransferase from Shigella flexneri serotype 5b (strain 8401).